The chain runs to 222 residues: Non-structural protein V (222 aa).

The interval 61–107 is disordered; that stretch reads ESTNHQKGSVGGGAKPKKPRPKIAIVPADDKTVPGKPIPNPLLGLDS. Residues His-171, Cys-190, Cys-194, Cys-206, Cys-208, Cys-211, Cys-215, and Cys-218 each coordinate Zn(2+).

It belongs to the paramyxoviruses V protein family. Interacts with host DDB1, STAT2 and IFIH1/MDA5. Interacts with host RIGI regulatory protein (via CARDs domain) and host TRIM25 (via SPRY domain); these interactions prevent TRIM25-mediated ubiquitination of RIG-I and disrupts downstream RIG-I signaling.

Its subcellular location is the host cytoplasm. Its function is as follows. Plays an essential role in the inhibition of host immune response. Prevents the establishment of cellular antiviral state by blocking interferon-alpha/beta (IFN-alpha/beta) production and signaling pathway. Interacts with host IFIH1/MDA5 and DHX58/LGP2 to inhibit the transduction pathway involved in the activation of IFN-beta promoter, thus protecting the virus against cell antiviral state. Efficiently blocks type I IFN signaling following infection by behaving as a substrate receptor for CUL4-DDB1 E3 ligase complex and targeting host STAT1 for proteasomal degradation. Blocks the type I interferon signaling pathway by disrupting the RIG-I signaling pathway. The chain is Non-structural protein V (P/V) from Parainfluenza virus 5 (strain W3) (PIV5).